A 207-amino-acid polypeptide reads, in one-letter code: Large ribosomal subunit protein uL4 (207 aa).

The segment at 52–75 is disordered; that stretch reads KNRSAVRGGGKKPWRQKGTGRARQ. Positions 60–71 are enriched in basic residues; the sequence is GGKKPWRQKGTG.

The protein belongs to the universal ribosomal protein uL4 family. In terms of assembly, part of the 50S ribosomal subunit.

One of the primary rRNA binding proteins, this protein initially binds near the 5'-end of the 23S rRNA. It is important during the early stages of 50S assembly. It makes multiple contacts with different domains of the 23S rRNA in the assembled 50S subunit and ribosome. In terms of biological role, forms part of the polypeptide exit tunnel. In Limosilactobacillus fermentum (strain NBRC 3956 / LMG 18251) (Lactobacillus fermentum), this protein is Large ribosomal subunit protein uL4.